An 821-amino-acid chain; its full sequence is Calpain-3 (821 aa).

Residues 1-37 (MPTVISPTVAPRTGAEPRSPGPVPHPAQGKTTEAGGG) are disordered. Residues 74–417 (LYLDPEFPPD…FTKLEICNLT (344 aa)) form the Calpain catalytic domain. Active-site residues include Cys129, His334, and Asn358. The interval 418 to 586 (ADALESDKLQ…KRNLSEEAEN (169 aa)) is domain III. The linker stretch occupies residues 587-649 (TISVDRPVKK…RPGHTDQESE (63 aa)). The tract at residues 603 to 651 (IFVSDRANSNKELGVDQEAEEGKDKTGPDKQGESPQPRPGHTDQESEEQ) is disordered. A compositionally biased stretch (basic and acidic residues) spans 622-634 (EEGKDKTGPDKQG). 4 consecutive EF-hand domains span residues 649–683 (EEQQ…VVNK), 692–725 (FTLE…KKIK), 722–757 (KKIK…AGFH), and 787–821 (VRLE…TMYA). The tract at residues 650–820 (EQQQFRNIFR…VLEWLQLTMY (171 aa)) is domain IV. Residues Ala662, Asp665, Glu667, Glu672, Asp705, Asp707, Ser709, Arg711, Glu716, Asp735, Asp737, Ser739, Thr741, Glu746, Asp800, Asp802, Asp804, and Ile806 each coordinate Ca(2+).

Belongs to the peptidase C2 family. As to quaternary structure, homodimer; via EF-hand domain 4. Interacts with TTN/titin. Interacts with CMYA5; this interaction, which results in CMYA5 proteolysis, may protect CAPN3 from autolysis. Interacts with SIMC1. Interacts with UTP25; the interaction is required for CAPN3 translocation to the nucleolus. Skeletal muscle.

The protein resides in the cytoplasm. It is found in the nucleus. It localises to the nucleolus. It carries out the reaction Broad endopeptidase activity.. Its activity is regulated as follows. Activated by micromolar concentrations of calcium and inhibited by calpastatin. Functionally, calcium-regulated non-lysosomal thiol-protease. Proteolytically cleaves CTBP1 at 'His-399'. Mediates, with UTP25, the proteasome-independent degradation of p53/TP53. The polypeptide is Calpain-3 (Capn3) (Rattus norvegicus (Rat)).